Reading from the N-terminus, the 628-residue chain is Modular serine protease (628 aa).

An N-terminal signal peptide occupies residues 1–25; that stretch reads MQLISFLSNPLFFCALLLKFRTIFA. LDL-receptor class A domains follow at residues 26–64, 69–107, 122–163, and 166–204; these read ACDSSQFECDNGSCISQYDVCNGEKNCPDGSDETALTCV, HCTKPYFQCTYGACVIGTAGCNGVNECADGSDETRLRCG, NCKE…ELCG, and ECPAYSFKCGTGGCISGSLSCNGENDCYDGSDEAPLLCN. Disulfide bonds link Cys-27–Cys-39, Cys-34–Cys-52, Cys-46–Cys-63, Cys-70–Cys-82, Cys-77–Cys-95, Cys-89–Cys-106, Cys-123–Cys-135, Cys-130–Cys-149, Cys-143–Cys-162, Cys-167–Cys-179, Cys-174–Cys-192, and Cys-186–Cys-203. The N-linked (GlcNAc...) asparagine glycan is linked to Asn-36. N-linked (GlcNAc...) asparagine glycosylation is present at Asn-204. 2 consecutive Sushi domains span residues 222 to 285 and 300 to 356; these read LGCP…KCVK and ALCT…RCEQ. 4 disulfides stabilise this stretch: Cys-224–Cys-270, Cys-256–Cys-283, Cys-302–Cys-341, and Cys-326–Cys-354. A Peptidase S1 domain is found at 369–621; it reads SSGGYTINNT…FEDMILNAMN (253 aa). N-linked (GlcNAc...) asparagine glycosylation occurs at Asn-376. The cysteines at positions 399 and 415 are disulfide-linked. Catalysis depends on charge relay system residues His-414, Asp-472, and Ser-563. Asn-621 carries an N-linked (GlcNAc...) asparagine glycan.

Belongs to the peptidase S1 family. In terms of processing, may be proteolytically cleaved via an autocatalytic mechanism.

It localises to the secreted. Its function is as follows. Serine protease that plays a key role in innate immunity by activating the Toll pathway in response to infection with Gram-positive bacteria and fungi. During Gram-positive infection, acts downstream of PGRP-SA and upstream of Grass and Spz, and therefore appears to function in a pathway that links detection of Gram-positive lysine-type peptidoglycans to Toll activation. Functions in a separate pathway to the psh-mediated activation of the Toll pathway. The sequence is that of Modular serine protease from Drosophila melanogaster (Fruit fly).